The chain runs to 203 residues: Glycerol-3-phosphate acyltransferase (203 aa).

Transmembrane regions (helical) follow at residues Leu-6 to Val-26, Ala-82 to Phe-102, Ala-118 to Ile-138, and Tyr-141 to Asp-161.

The protein belongs to the PlsY family. In terms of assembly, probably interacts with PlsX.

It localises to the cell inner membrane. It catalyses the reaction an acyl phosphate + sn-glycerol 3-phosphate = a 1-acyl-sn-glycero-3-phosphate + phosphate. It functions in the pathway lipid metabolism; phospholipid metabolism. Functionally, catalyzes the transfer of an acyl group from acyl-phosphate (acyl-PO(4)) to glycerol-3-phosphate (G3P) to form lysophosphatidic acid (LPA). This enzyme utilizes acyl-phosphate as fatty acyl donor, but not acyl-CoA or acyl-ACP. The polypeptide is Glycerol-3-phosphate acyltransferase (Shewanella sp. (strain MR-4)).